The following is a 337-amino-acid chain: Tetraacyldisaccharide 4'-kinase (337 aa).

72-79 (TVGGSGKT) provides a ligand contact to ATP.

The protein belongs to the LpxK family.

It carries out the reaction a lipid A disaccharide + ATP = a lipid IVA + ADP + H(+). The protein operates within glycolipid biosynthesis; lipid IV(A) biosynthesis; lipid IV(A) from (3R)-3-hydroxytetradecanoyl-[acyl-carrier-protein] and UDP-N-acetyl-alpha-D-glucosamine: step 6/6. Functionally, transfers the gamma-phosphate of ATP to the 4'-position of a tetraacyldisaccharide 1-phosphate intermediate (termed DS-1-P) to form tetraacyldisaccharide 1,4'-bis-phosphate (lipid IVA). This Shewanella sediminis (strain HAW-EB3) protein is Tetraacyldisaccharide 4'-kinase.